A 224-amino-acid polypeptide reads, in one-letter code: Charged multivesicular body protein 4b (224 aa).

Residues M1–Q23 are disordered. S2 bears the N-acetylserine mark. K6 bears the N6-acetyllysine mark. A compositionally biased stretch (gly residues) spans F8–G19. The stretch at Q23 to I183 forms a coiled coil. N6-acetyllysine is present on K114. A phosphoserine mark is found at S184 and S223. Positions G185–M224 are disordered.

It belongs to the SNF7 family. Probable core component of the endosomal sorting required for transport complex III (ESCRT-III). ESCRT-III components are thought to multimerize to form a flat lattice on the perimeter membrane of the endosome. Several assembly forms of ESCRT-III may exist that interact and act sequentially. Interacts with CHMP6 and CHMP4C. Interacts with PDCD6IP; the interaction is direct. Interacts with VPS4A; the interaction is direct. Interacts with VPS4B; the interaction is direct. Interacts with CHMP7. Interacts with CFTR; the interaction requires misfolded CFTR. Interacts with PTPN23. Interacts with CC2D1B. Post-translationally, ISGylated. Isgylation weakens its interaction with VPS4A. In terms of tissue distribution, widely expressed. Expressed at higher level in heart and skeletal muscle. Also expressed in brain, colon, thymus, spleen, kidney, liver, small intestine, placenta, lung and peripheral blood lymphocytes.

It is found in the cytoplasm. It localises to the cytosol. The protein resides in the late endosome membrane. Its subcellular location is the midbody. The protein localises to the nucleus envelope. Functionally, probable core component of the endosomal sorting required for transport complex III (ESCRT-III) which is involved in multivesicular bodies (MVBs) formation and sorting of endosomal cargo proteins into MVBs. MVBs contain intraluminal vesicles (ILVs) that are generated by invagination and scission from the limiting membrane of the endosome and mostly are delivered to lysosomes enabling degradation of membrane proteins, such as stimulated growth factor receptors, lysosomal enzymes and lipids. The MVB pathway appears to require the sequential function of ESCRT-O, -I,-II and -III complexes. ESCRT-III proteins mostly dissociate from the invaginating membrane before the ILV is released. The ESCRT machinery also functions in topologically equivalent membrane fission events, such as the terminal stages of cytokinesis. Together with SPAST, the ESCRT-III complex promotes nuclear envelope sealing and mitotic spindle disassembly during late anaphase. Plays a role in the endosomal sorting pathway. ESCRT-III proteins are believed to mediate the necessary vesicle extrusion and/or membrane fission activities, possibly in conjunction with the AAA ATPase VPS4. When overexpressed, membrane-assembled circular arrays of CHMP4B filaments can promote or stabilize negative curvature and outward budding. CHMP4A/B/C are required for the exosomal release of SDCBP, CD63 and syndecan. Majority of the protein exists in a folded closed conformation. In terms of biological role, (Microbial infection) The ESCRT machinery also functions in topologically equivalent membrane fission events, such as the budding of enveloped viruses (HIV-1 and other lentiviruses). Via its interaction with PDCD6IP involved in HIV-1 p6- and p9-dependent virus release. The sequence is that of Charged multivesicular body protein 4b (CHMP4B) from Homo sapiens (Human).